Reading from the N-terminus, the 307-residue chain is tRNA pseudouridine synthase B (307 aa).

Residue D38 is the Nucleophile of the active site.

The protein belongs to the pseudouridine synthase TruB family. Type 1 subfamily.

It catalyses the reaction uridine(55) in tRNA = pseudouridine(55) in tRNA. Functionally, responsible for synthesis of pseudouridine from uracil-55 in the psi GC loop of transfer RNAs. This is tRNA pseudouridine synthase B from Lachnoclostridium phytofermentans (strain ATCC 700394 / DSM 18823 / ISDg) (Clostridium phytofermentans).